Reading from the N-terminus, the 165-residue chain is Chorismate pyruvate-lyase (165 aa).

Positions 35, 77, 115, and 156 each coordinate substrate.

The protein belongs to the UbiC family. In terms of assembly, monomer.

It is found in the cytoplasm. The catalysed reaction is chorismate = 4-hydroxybenzoate + pyruvate. Its pathway is cofactor biosynthesis; ubiquinone biosynthesis. Its function is as follows. Removes the pyruvyl group from chorismate, with concomitant aromatization of the ring, to provide 4-hydroxybenzoate (4HB) for the ubiquinone pathway. The polypeptide is Chorismate pyruvate-lyase (Salmonella arizonae (strain ATCC BAA-731 / CDC346-86 / RSK2980)).